The chain runs to 112 residues: Tyrosine-protein phosphatase 17 (112 aa).

The Tyrosine-protein phosphatase domain occupies 1–112; the sequence is WRMIWEHECC…QPHTAGPIVV (112 aa). D82 provides a ligand contact to substrate.

This sequence belongs to the protein-tyrosine phosphatase family.

It catalyses the reaction O-phospho-L-tyrosyl-[protein] + H2O = L-tyrosyl-[protein] + phosphate. The sequence is that of Tyrosine-protein phosphatase 17 (STY-17) from Styela plicata (Wrinkled sea squirt).